The chain runs to 744 residues: MDHAEENEIPAETQKYLVERPIFSHPVLQERLHVKDKVTDSIGDKLKQAFTCTPKKVRNIIYMFLPITKWLPAYKFKEYVLGDLVSGISTGVLQLPQGLAFAMLAAVPPVFGLYSSFYPVIMYCFFGTSRHISIGPFAVISLMIGGVAVRLVPDDIVIPGGVNATNGTEARDALRVKVAMSVTLLSGIIQFCLGVCRFGFVAIYLTEPLVRGFTTAAAVHVFTSMLKYLFGVKTKRYSGIFSVVYSTVAVLQNVKNLNVCSLGVGLMVFGLLLGGKEFNERFKEKLPAPIPLEFFAVVMGTGISAGFNLHESYSVDVVGTLPLGLLPPANPDTSLFHLVYVDAIAIAIVGFSVTISMAKTLANKHGYQVDGNQELIALGICNSIGSLFQTFSISCSLSRSLVQEGTGGKTQLAGCLASLMILLVILATGFLFESLPQAVLSAIVIVNLKGMFMQFSDLPFFWRTSKIELTIWLTTFVSSLFLGLDYGLITAVIIALLTVIYRTQSPSYTVLGQLPDTDVYIDIDAYEEVKEIPGIKIFQINAPIYYANSDLYSSALKRKTGVNPAIIMGARRKAMRKYAKEVGNANIANATVVKVDAEVDGENATKPEEEDDEVKFPPIVIKTTFPEELQRFLPQGENIHTVILDFTQVNFMDSVGVKTLAGIVKEYGDVGIYVYLAGCSAQVVNDLTSNRFFENPALKELLFHSIHDAVLGSQVREAMAEQETTVLPPQEDMEPNATPTTPEA.

At 1–75 the chain is on the cytoplasmic side; sequence MDHAEENEIP…PITKWLPAYK (75 aa). A helical membrane pass occupies residues 76–104; sequence FKEYVLGDLVSGISTGVLQLPQGLAFAML. Residues 105 to 108 lie on the Extracellular side of the membrane; sequence AAVP. Residues 109–126 traverse the membrane as a helical segment; the sequence is PVFGLYSSFYPVIMYCFF. Topologically, residues 127–137 are cytoplasmic; that stretch reads GTSRHISIGPF. A helical membrane pass occupies residues 138-149; sequence AVISLMIGGVAV. Residues 150 to 168 are Extracellular-facing; the sequence is RLVPDDIVIPGGVNATNGT. An Involved in motor function motif is present at residues 158-168; that stretch reads IPGGVNATNGT. N-linked (GlcNAc...) asparagine glycosylation is found at Asn-163 and Asn-166. A helical transmembrane segment spans residues 169 to 196; it reads EARDALRVKVAMSVTLLSGIIQFCLGVC. Residues 197-206 lie on the Cytoplasmic side of the membrane; sequence RFGFVAIYLT. Residues 207-230 form a helical membrane-spanning segment; sequence EPLVRGFTTAAAVHVFTSMLKYLF. The Extracellular segment spans residues 231-241; that stretch reads GVKTKRYSGIF. The helical intramembrane region spans 242–253; that stretch reads SVVYSTVAVLQN. At 254 to 258 the chain is on the extracellular side; it reads VKNLN. Residues 259 to 276 form a helical membrane-spanning segment; it reads VCSLGVGLMVFGLLLGGK. Topologically, residues 277–291 are cytoplasmic; it reads EFNERFKEKLPAPIP. Residues 292–307 traverse the membrane as a helical segment; the sequence is LEFFAVVMGTGISAGF. Residues 308 to 332 are Extracellular-facing; the sequence is NLHESYSVDVVGTLPLGLLPPANPD. A helical transmembrane segment spans residues 333-359; it reads TSLFHLVYVDAIAIAIVGFSVTISMAK. Topologically, residues 360-370 are cytoplasmic; that stretch reads TLANKHGYQVD. Residues 371 to 388 form a helical membrane-spanning segment; sequence GNQELIALGICNSIGSLF. The Extracellular segment spans residues 389-396; that stretch reads QTFSISCS. Residues 397-406 form a helical membrane-spanning segment; it reads LSRSLVQEGT. Residue Ser-398 coordinates salicylate. Over 407–410 the chain is Cytoplasmic; it reads GGKT. Residues 411–431 form a helical membrane-spanning segment; that stretch reads QLAGCLASLMILLVILATGFL. The Extracellular portion of the chain corresponds to 432–436; it reads FESLP. The chain crosses the membrane as a helical span at residues 437-464; sequence QAVLSAIVIVNLKGMFMQFSDLPFFWRT. A topological domain (cytoplasmic) is located at residue Ser-465. Residues 466-481 traverse the membrane as a helical segment; sequence KIELTIWLTTFVSSLF. The Extracellular portion of the chain corresponds to 482-484; sequence LGL. Residues 485–504 form a helical membrane-spanning segment; the sequence is DYGLITAVIIALLTVIYRTQ. The interval 505 to 718 is extended region for STAS domain; the sequence is SPSYTVLGQL…AVLGSQVREA (214 aa). The Cytoplasmic segment spans residues 505-744; sequence SPSYTVLGQL…PNATPTTPEA (240 aa). The STAS domain occupies 525–713; sequence AYEEVKEIPG…HSIHDAVLGS (189 aa). Residues 720–744 form a disordered region; it reads AEQETTVLPPQEDMEPNATPTTPEA.

It belongs to the SLC26A/SulP transporter (TC 2.A.53) family. Homodimer. Interacts (via STAS domain) with CALM; this interaction is calcium-dependent and the STAS domain interacts with only one lobe of CALM which is an elongated conformation. Interacts with MYH1. In terms of tissue distribution, specifically expressed in outer hair cells of cochleae (at protein level). Not detected in other cells of the organ of Corti.

The protein localises to the lateral cell membrane. It catalyses the reaction 2 hydrogencarbonate(in) + chloride(out) = 2 hydrogencarbonate(out) + chloride(in). Its activity is regulated as follows. Salicylate, an inhibitor of outer hair cell motility, acts as a competitive antagonist at the prestin anion-binding site. Functionally, voltage-sensitive motor protein that drives outer hair cell (OHC) electromotility (eM) and participates in sound amplification in the hearing organ. Converts changes in the transmembrane electric potential into mechanical displacements resulting in the coupling of its expansion to movement of a charged voltage sensor across the lipid membrane. The nature of the voltage sensor is not completely clear, and two models compete. In the first model, acts as an incomplete transporter where intracellular chloride anion acts as extrinsic voltage sensor that drives conformational change in the protein which is sufficient to produce a length change in the plane of the membrane and hence in the length of the OHC. The second model in which multiple charged amino acid residues are distributed at the intracellular and extracellular membrane interfaces that form an intrinsic voltage sensor, whose movement produces the non-linear capacitance (NLC). However, the effective voltage sensor may be the result of a hybrid voltage sensor assembled from intrinsic charge (charged residues) and extrinsic charge (bound anion). Notably, binding of anions to the anion-binding pocket partially neutralizes the intrinsic positive charge rather than to form an electrically negative sensor, therefore remaining charge may serve as voltage sensor that, after depolarization, moves from down (expanded state) to up (contracted) conformation, which is accompanied by an eccentric contraction of the intermembrane cross-sectional area of the protein as well as a major increase in the hydrophobic thickness of the protein having as consequences the plasma membrane thickening and the cell contraction after membrane depolarization. The anion-binding pocket transits from the inward-open (Down) state, where it is exposed toward the intracellular solvent in the absence of anion, to the occluded (Up) state upon anion binding. Salicylate competes for the anion-binding site and inhibits the voltage-sensor movement, and therefore inhibits the charge transfer and electromotility by displacing Cl(-) from the anion-binding site and by preventing the structural transitions to the contracted state. In addition, can act as a weak Cl(-)/HCO3(-) antiporter across the cell membrane and so regulate the intracellular pH of the outer hair cells (OHCs), while firstly found as being unable to mediate electrogenic anion transport. Moreover, supports a role in cardiac mechanical amplification serving as an elastic element to enhance the actomyosin- based sarcomere contraction system. The chain is Prestin from Rattus norvegicus (Rat).